The following is a 350-amino-acid chain: Small ribosomal subunit biogenesis GTPase RsgA (350 aa).

Polar residues predominate over residues 1–17 (MSKNKLSKGQQRRVNAN). The interval 1-33 (MSKNKLSKGQQRRVNANHQRRLKTSKEKPDYDD) is disordered. The region spanning 104–273 (TSVLTRPDFY…VIDSPGVREF (170 aa)) is the CP-type G domain. Residues 160-163 (NKID) and 214-222 (GQSGVGKSS) each bind GTP. 4 residues coordinate Zn(2+): cysteine 297, cysteine 302, histidine 304, and cysteine 310.

Belongs to the TRAFAC class YlqF/YawG GTPase family. RsgA subfamily. Monomer. Associates with 30S ribosomal subunit, binds 16S rRNA. Requires Zn(2+) as cofactor.

The protein localises to the cytoplasm. In terms of biological role, one of several proteins that assist in the late maturation steps of the functional core of the 30S ribosomal subunit. Helps release RbfA from mature subunits. May play a role in the assembly of ribosomal proteins into the subunit. Circularly permuted GTPase that catalyzes slow GTP hydrolysis, GTPase activity is stimulated by the 30S ribosomal subunit. This is Small ribosomal subunit biogenesis GTPase RsgA from Escherichia coli (strain ATCC 8739 / DSM 1576 / NBRC 3972 / NCIMB 8545 / WDCM 00012 / Crooks).